The chain runs to 307 residues: Protease HtpX homolog (307 aa).

2 helical membrane passes run 10 to 30 (VITILAGIGIALLFSLIAYGL) and 40 to 60 (ISIIYFLLIFVLFIDIIQWLV). His-144 lines the Zn(2+) pocket. The active site involves Glu-145. His-148 contacts Zn(2+). A run of 2 helical transmembrane segments spans residues 156-176 (LLLAIGLIPTLIFYLGYSMIF) and 187-207 (FFLVAIILFILSSVFNIMILG). Zn(2+) is bound at residue Glu-213.

The protein belongs to the peptidase M48B family. Requires Zn(2+) as cofactor.

Its subcellular location is the cell membrane. The polypeptide is Protease HtpX homolog (Picrophilus torridus (strain ATCC 700027 / DSM 9790 / JCM 10055 / NBRC 100828 / KAW 2/3)).